The chain runs to 160 residues: Ribosomal RNA large subunit methyltransferase H (160 aa).

S-adenosyl-L-methionine-binding residues include Leu76 and Gly108.

The protein belongs to the RNA methyltransferase RlmH family. Homodimer.

The protein resides in the cytoplasm. It catalyses the reaction pseudouridine(1915) in 23S rRNA + S-adenosyl-L-methionine = N(3)-methylpseudouridine(1915) in 23S rRNA + S-adenosyl-L-homocysteine + H(+). Functionally, specifically methylates the pseudouridine at position 1915 (m3Psi1915) in 23S rRNA. The chain is Ribosomal RNA large subunit methyltransferase H from Afipia carboxidovorans (strain ATCC 49405 / DSM 1227 / KCTC 32145 / OM5) (Oligotropha carboxidovorans).